A 78-amino-acid chain; its full sequence is Pancreatic polypeptide prohormone (78 aa).

The first 19 residues, 1–19 (LLLSTCVALLLQPPLGALG), serve as a signal peptide directing secretion. Tyr-55 carries the post-translational modification Tyrosine amide.

It belongs to the NPY family.

It is found in the secreted. Its function is as follows. Hormone secreted by pancreatic cells that acts as a regulator of pancreatic and gastrointestinal functions probably by signaling through the G protein-coupled receptor NPY4R2. The sequence is that of Pancreatic polypeptide prohormone (PPY) from Ovis aries (Sheep).